A 326-amino-acid polypeptide reads, in one-letter code: Phospho-N-acetylmuramoyl-pentapeptide-transferase (326 aa).

9 helical membrane passes run 3–23 (ISIS…PAFI), 51–71 (TMGG…FALF), 79–99 (VGMI…DDFL), 115–135 (LALQ…GGDI), 138–158 (VFGY…FWLV), 169–189 (GVDG…GVIA), 195–215 (MDIL…FIFN), 221–243 (VFMG…MALH), and 306–326 (FFFW…LYLM).

This sequence belongs to the glycosyltransferase 4 family. MraY subfamily. Requires Mg(2+) as cofactor.

The protein localises to the cell membrane. It carries out the reaction UDP-N-acetyl-alpha-D-muramoyl-L-alanyl-gamma-D-glutamyl-L-lysyl-D-alanyl-D-alanine + di-trans,octa-cis-undecaprenyl phosphate = Mur2Ac(oyl-L-Ala-gamma-D-Glu-L-Lys-D-Ala-D-Ala)-di-trans,octa-cis-undecaprenyl diphosphate + UMP. The protein operates within cell wall biogenesis; peptidoglycan biosynthesis. Catalyzes the initial step of the lipid cycle reactions in the biosynthesis of the cell wall peptidoglycan: transfers peptidoglycan precursor phospho-MurNAc-pentapeptide from UDP-MurNAc-pentapeptide onto the lipid carrier undecaprenyl phosphate, yielding undecaprenyl-pyrophosphoryl-MurNAc-pentapeptide, known as lipid I. The chain is Phospho-N-acetylmuramoyl-pentapeptide-transferase from Streptococcus pneumoniae serotype 19F (strain G54).